Reading from the N-terminus, the 141-residue chain is Probable trafficking protein particle complex subunit 2 (141 aa).

This sequence belongs to the TRAPP small subunits family. Sedlin subfamily. In terms of assembly, part of the multisubunit TRAPP (transport protein particle) complex.

The protein resides in the cytoplasm. The protein localises to the perinuclear region. It localises to the endoplasmic reticulum. It is found in the golgi apparatus. In terms of biological role, may play a role in vesicular transport from endoplasmic reticulum to Golgi. Required for the systemic spread of the RNAi response. The protein is Probable trafficking protein particle complex subunit 2 (sedl-1) of Caenorhabditis elegans.